The chain runs to 195 residues: 3-isopropylmalate dehydratase small subunit (195 aa).

This sequence belongs to the LeuD family. LeuD type 1 subfamily. Heterodimer of LeuC and LeuD.

It carries out the reaction (2R,3S)-3-isopropylmalate = (2S)-2-isopropylmalate. It functions in the pathway amino-acid biosynthesis; L-leucine biosynthesis; L-leucine from 3-methyl-2-oxobutanoate: step 2/4. Catalyzes the isomerization between 2-isopropylmalate and 3-isopropylmalate, via the formation of 2-isopropylmaleate. This chain is 3-isopropylmalate dehydratase small subunit, found in Thermobifida fusca (strain YX).